The following is a 407-amino-acid chain: Imidazolonepropionase (407 aa).

2 residues coordinate Fe(3+): H74 and H76. Zn(2+) is bound by residues H74 and H76. 3 residues coordinate 4-imidazolone-5-propanoate: R83, Y146, and H179. Residue Y146 participates in N-formimidoyl-L-glutamate binding. H244 is a Fe(3+) binding site. H244 provides a ligand contact to Zn(2+). Q247 provides a ligand contact to 4-imidazolone-5-propanoate. Position 319 (D319) interacts with Fe(3+). D319 is a binding site for Zn(2+). N-formimidoyl-L-glutamate-binding residues include N321 and G323. T324 is a 4-imidazolone-5-propanoate binding site.

The protein belongs to the metallo-dependent hydrolases superfamily. HutI family. Zn(2+) is required as a cofactor. Requires Fe(3+) as cofactor.

It is found in the cytoplasm. It catalyses the reaction 4-imidazolone-5-propanoate + H2O = N-formimidoyl-L-glutamate. Its pathway is amino-acid degradation; L-histidine degradation into L-glutamate; N-formimidoyl-L-glutamate from L-histidine: step 3/3. Functionally, catalyzes the hydrolytic cleavage of the carbon-nitrogen bond in imidazolone-5-propanoate to yield N-formimidoyl-L-glutamate. It is the third step in the universal histidine degradation pathway. The polypeptide is Imidazolonepropionase (Salmonella paratyphi A (strain ATCC 9150 / SARB42)).